The chain runs to 128 residues: Large ribosomal subunit protein bL19 (128 aa).

Belongs to the bacterial ribosomal protein bL19 family.

Functionally, this protein is located at the 30S-50S ribosomal subunit interface and may play a role in the structure and function of the aminoacyl-tRNA binding site. The chain is Large ribosomal subunit protein bL19 from Bradyrhizobium sp. (strain ORS 278).